We begin with the raw amino-acid sequence, 40 residues long: Muscarinic m1-toxin4 (40 aa).

Residues C3 and C24 are joined by a disulfide bond.

It belongs to the three-finger toxin family. Short-chain subfamily. Aminergic toxin sub-subfamily. Monomer. Contains 4 disulfide bonds. Expressed by the venom gland.

Its subcellular location is the secreted. Its function is as follows. Binds irreversibly and specifically to M1 (CHRM1) muscarinic acetylcholine receptors, blocking further binding of antagonists and preventing the action of agonists. The chain is Muscarinic m1-toxin4 from Dendroaspis angusticeps (Eastern green mamba).